Reading from the N-terminus, the 279-residue chain is 5'-nucleotidase SurE 1 (279 aa).

A divalent metal cation contacts are provided by aspartate 12, aspartate 13, serine 45, and asparagine 103.

Belongs to the SurE nucleotidase family. The cofactor is a divalent metal cation.

It is found in the cytoplasm. The catalysed reaction is a ribonucleoside 5'-phosphate + H2O = a ribonucleoside + phosphate. Nucleotidase that shows phosphatase activity on nucleoside 5'-monophosphates. The protein is 5'-nucleotidase SurE 1 of Chlamydia caviae (strain ATCC VR-813 / DSM 19441 / 03DC25 / GPIC) (Chlamydophila caviae).